Reading from the N-terminus, the 280-residue chain is Probable endonuclease 4 (280 aa).

Residues H68, H108, E143, D177, H180, H214, D227, H229, and E259 each coordinate Zn(2+).

Belongs to the AP endonuclease 2 family. It depends on Zn(2+) as a cofactor.

The enzyme catalyses Endonucleolytic cleavage to 5'-phosphooligonucleotide end-products.. In terms of biological role, endonuclease IV plays a role in DNA repair. It cleaves phosphodiester bonds at apurinic or apyrimidinic (AP) sites, generating a 3'-hydroxyl group and a 5'-terminal sugar phosphate. The chain is Probable endonuclease 4 from Cenarchaeum symbiosum (strain A).